The primary structure comprises 767 residues: Pyrin (767 aa).

A Pyrin domain is found at 1 to 92; it reads MAKTLGDHLL…AEELRKATGT (92 aa). Positions 94 to 219 are disordered; it reads HLIEENRVGG…LQGLYNNAPG (126 aa). Composition is skewed to polar residues over residues 126 to 142, 165 to 176, and 183 to 208; these read GTQQ…SSQA, LDSQTKPWTRST, and TQGT…SSAG. The residue at position 241 (S241) is a Phosphoserine. The segment at 311–346 is disordered; that stretch reads TSLIGEERCPTSWTENGNGSPETTESSGETAGSILS. The segment covering 321-340 has biased composition (polar residues); that stretch reads TSWTENGNGSPETTESSGET. The B box-type zinc finger occupies 439–481; the sequence is QSLPQCPRHMKQVLLLFCEDHREPICLICRLSLEHQGHRVRPI. Positions 444, 447, 467, and 473 each coordinate Zn(2+). Residues 481 to 510 are a coiled coil; it reads IEEAALEYKEQIREQLERLREMRGYVEEHR. The segment at 489–647 is required for homotrimerization and induction of pyroptosomes; that stretch reads KEQIREQLER…CFSEMLSSEM (159 aa). The segment at 697–719 is disordered; that stretch reads GGSEPKDYLHPQPAQDTPELHEI.

Homotrimer. Interacts (via the B box-type zinc finger) with PSTPIP1. Interacts (via the B30.2/SPRY domain) with several components of the inflammasome complex, including CASP1 p20 and p10 subunits, CASP5, PYCARD, NLRP1, NLRP2 and NLRP3, as well as with unprocessed IL1B; this interaction may lead to autophagic degradation of these proteins. Component of the AIM2 PANoptosome complex, a multiprotein complex that drives inflammatory cell death (PANoptosis). Interacts with NFKBIA and RELA. Interacts weakly with VASP and ACTR3. Interacts with active ULK1 (phosphorylated on 'Ser-317') and BECN1 simultaneously. Also interacts with ATG16L1 (via WD repeats), and with ATG8 family members, including GABARAP, GABARAPL1 and, to a lesser extent, GABARAPL2, MAP1LC3A/LC3A and MAP1LC3C/LC3C. Interacts with TRIM21. Interacts with YWHAB, YWHAE, YWHAG, YWHAH, YWHAQ and YWHAZ; the interaction is required for the down-regulation of pyrin pro-inflammatory activity. In terms of processing, phosphorylation at Ser-241 is required for the interaction with 14-3-3 proteins and down-regulation of pyrin pro-inflammatory activity. Degraded along with the delivery of its substrates to autolysosomal compartments (at protein level). In terms of tissue distribution, expressed in spleen peripheral blood granulocytes. Not expressed in lymphocytes, thymus, testis, ovary, heart, brain, lung, liver, kidney and muscle.

It localises to the cytoplasm. The protein localises to the cytoskeleton. The protein resides in the cell projection. Its subcellular location is the ruffle. It is found in the lamellipodium. It localises to the cytoplasmic vesicle. The protein localises to the autophagosome. The protein resides in the nucleus. Functionally, involved in the regulation of innate immunity and the inflammatory response in response to IFNG/IFN-gamma. Organizes autophagic machinery by serving as a platform for the assembly of ULK1, Beclin 1/BECN1, ATG16L1, and ATG8 family members and recognizes specific autophagy targets, thus coordinating target recognition with assembly of the autophagic apparatus and initiation of autophagy. Acts as an autophagy receptor for the degradation of several inflammasome components, including CASP1, NLRP1 and NLRP3, hence preventing excessive IL1B- and IL18-mediated inflammation. However, it can also have a positive effect in the inflammatory pathway, acting as an innate immune sensor that triggers PYCARD/ASC specks formation, caspase-1 activation, and IL1B and IL18 production. Together with AIM2, also acts as a mediator of pyroptosis, necroptosis and apoptosis (PANoptosis), an integral part of host defense against pathogens, in response to bacterial infection. It is required for PSTPIP1-induced PYCARD/ASC oligomerization and inflammasome formation. Recruits PSTPIP1 to inflammasomes, and is required for PSTPIP1 oligomerization. This is Pyrin from Mus musculus (Mouse).